The primary structure comprises 256 residues: 5-keto-4-deoxy-D-glucarate aldolase (256 aa).

Catalysis depends on His-50, which acts as the Proton acceptor. Gln-151 provides a ligand contact to substrate. Mg(2+) is bound at residue Glu-153. Ser-178 and Asp-179 together coordinate substrate. Position 179 (Asp-179) interacts with Mg(2+).

It belongs to the HpcH/HpaI aldolase family. KDGluc aldolase subfamily. As to quaternary structure, homohexamer; trimer of dimers. Mg(2+) serves as cofactor.

The catalysed reaction is 5-dehydro-4-deoxy-D-glucarate = 2-hydroxy-3-oxopropanoate + pyruvate. It catalyses the reaction 2-dehydro-3-deoxy-D-glucarate = 2-hydroxy-3-oxopropanoate + pyruvate. Its pathway is carbohydrate acid metabolism; galactarate degradation; D-glycerate from galactarate: step 2/3. In terms of biological role, catalyzes the reversible retro-aldol cleavage of both 5-keto-4-deoxy-D-glucarate and 2-keto-3-deoxy-D-glucarate to pyruvate and tartronic semialdehyde. This is 5-keto-4-deoxy-D-glucarate aldolase from Salmonella agona (strain SL483).